The chain runs to 103 residues: Large ribosomal subunit protein uL24 (103 aa).

It belongs to the universal ribosomal protein uL24 family. As to quaternary structure, part of the 50S ribosomal subunit.

Its function is as follows. One of two assembly initiator proteins, it binds directly to the 5'-end of the 23S rRNA, where it nucleates assembly of the 50S subunit. One of the proteins that surrounds the polypeptide exit tunnel on the outside of the subunit. This is Large ribosomal subunit protein uL24 from Mannheimia succiniciproducens (strain KCTC 0769BP / MBEL55E).